The sequence spans 205 residues: Probable GTP-binding protein EngB (205 aa).

Residues 22 to 198 form the EngB-type G domain; sequence HLPEYAFIGR…LSYIDEVNQD (177 aa). GTP-binding positions include 30–37, 57–61, 75–78, 142–145, and 177–179; these read GRSNVGKS, GKTQL, DLPG, TKAD, and TSA. Ser37 and Thr59 together coordinate Mg(2+).

Belongs to the TRAFAC class TrmE-Era-EngA-EngB-Septin-like GTPase superfamily. EngB GTPase family. Mg(2+) serves as cofactor.

Functionally, necessary for normal cell division and for the maintenance of normal septation. In Flavobacterium psychrophilum (strain ATCC 49511 / DSM 21280 / CIP 103535 / JIP02/86), this protein is Probable GTP-binding protein EngB.